A 455-amino-acid polypeptide reads, in one-letter code: Asparagine--tRNA ligase (455 aa).

Belongs to the class-II aminoacyl-tRNA synthetase family. As to quaternary structure, homodimer.

The protein localises to the cytoplasm. The enzyme catalyses tRNA(Asn) + L-asparagine + ATP = L-asparaginyl-tRNA(Asn) + AMP + diphosphate + H(+). The polypeptide is Asparagine--tRNA ligase (Lawsonia intracellularis (strain PHE/MN1-00)).